Consider the following 72-residue polypeptide: UPF0270 protein ETA_31870 (72 aa).

It belongs to the UPF0270 family.

This is UPF0270 protein ETA_31870 from Erwinia tasmaniensis (strain DSM 17950 / CFBP 7177 / CIP 109463 / NCPPB 4357 / Et1/99).